The sequence spans 218 residues: Ropporin-1-like protein (218 aa).

Residues 17–46 form the RIIa domain; the sequence is PELTDILKQFTKAAIRTQPADVLQWSAGYF.

It belongs to the ropporin family. In terms of assembly, component of the axonemal radial spoke complex 1 (RS1), at least composed of spoke head proteins RSPH1, RSPH3, RSPH9 and the cilia-specific component RSPH4A or sperm-specific component RSPH6A, spoke stalk proteins RSPH14, DNAJB13, DYDC1, ROPN1L and NME5, and the anchor protein IQUB. May interact with AKAP3. Interacts with FSCB; the interaction increases upon spermatozoa capacitation conditions. Interacts with CFAP61. Sumoylated, sumoylation decreases upon spermatozoa capacitation conditions.

The protein resides in the cell projection. Its subcellular location is the cilium. It localises to the flagellum. Functions as part of axonemal radial spoke complexes that play an important part in the motility of sperm and cilia. Important for male fertility. With ROPN1, involved in fibrous sheath integrity and sperm motility, plays a role in PKA-dependent signaling processes required for spermatozoa capacitation. In Bos taurus (Bovine), this protein is Ropporin-1-like protein (ROPN1L).